A 366-amino-acid chain; its full sequence is tRNA(Met) cytidine acetate ligase (366 aa).

ATP contacts are provided by residues 7–20, glycine 101, asparagine 145, and arginine 170; that span reads IAEF…HQYL.

The protein belongs to the TmcAL family.

The protein resides in the cytoplasm. It carries out the reaction cytidine(34) in elongator tRNA(Met) + acetate + ATP = N(4)-acetylcytidine(34) in elongator tRNA(Met) + AMP + diphosphate. In terms of biological role, catalyzes the formation of N(4)-acetylcytidine (ac(4)C) at the wobble position of elongator tRNA(Met), using acetate and ATP as substrates. First activates an acetate ion to form acetyladenylate (Ac-AMP) and then transfers the acetyl group to tRNA to form ac(4)C34. The chain is tRNA(Met) cytidine acetate ligase from Pediococcus pentosaceus (strain ATCC 25745 / CCUG 21536 / LMG 10740 / 183-1w).